A 643-amino-acid chain; its full sequence is Threonine--tRNA ligase (643 aa).

A TGS domain is found at 1–61 (MVAISLPDGS…TTDASVSLIT (61 aa)). Residues 243-534 (DHRRVGQEMD…LIENCAGRFP (292 aa)) are catalytic. 3 residues coordinate Zn(2+): cysteine 334, histidine 385, and histidine 511.

It belongs to the class-II aminoacyl-tRNA synthetase family. Homodimer. The cofactor is Zn(2+).

The protein localises to the cytoplasm. It carries out the reaction tRNA(Thr) + L-threonine + ATP = L-threonyl-tRNA(Thr) + AMP + diphosphate + H(+). In terms of biological role, catalyzes the attachment of threonine to tRNA(Thr) in a two-step reaction: L-threonine is first activated by ATP to form Thr-AMP and then transferred to the acceptor end of tRNA(Thr). Also edits incorrectly charged L-seryl-tRNA(Thr). The polypeptide is Threonine--tRNA ligase (Rhodospirillum rubrum (strain ATCC 11170 / ATH 1.1.1 / DSM 467 / LMG 4362 / NCIMB 8255 / S1)).